The sequence spans 401 residues: S-adenosylmethionine synthase (401 aa).

137-142 provides a ligand contact to ATP; the sequence is GEGSGD. The interval 272-305 is disordered; sequence GTSAEQGDDGSVGRGNRSNGLITPNRSMSMEATS. Residues 287–305 show a composition bias toward polar residues; it reads NRSNGLITPNRSMSMEATS.

It belongs to the AdoMet synthase 2 family. The cofactor is Mg(2+).

The catalysed reaction is L-methionine + ATP + H2O = S-adenosyl-L-methionine + phosphate + diphosphate. The protein operates within amino-acid biosynthesis; S-adenosyl-L-methionine biosynthesis; S-adenosyl-L-methionine from L-methionine: step 1/1. Functionally, catalyzes the formation of S-adenosylmethionine from methionine and ATP. The protein is S-adenosylmethionine synthase of Natronomonas pharaonis (strain ATCC 35678 / DSM 2160 / CIP 103997 / JCM 8858 / NBRC 14720 / NCIMB 2260 / Gabara) (Halobacterium pharaonis).